A 273-amino-acid polypeptide reads, in one-letter code: Ribosomal RNA small subunit methyltransferase A (273 aa).

Residues asparagine 20, leucine 22, glycine 47, glutamate 68, aspartate 90, and asparagine 110 each contribute to the S-adenosyl-L-methionine site.

Belongs to the class I-like SAM-binding methyltransferase superfamily. rRNA adenine N(6)-methyltransferase family. RsmA subfamily.

The protein resides in the cytoplasm. It carries out the reaction adenosine(1518)/adenosine(1519) in 16S rRNA + 4 S-adenosyl-L-methionine = N(6)-dimethyladenosine(1518)/N(6)-dimethyladenosine(1519) in 16S rRNA + 4 S-adenosyl-L-homocysteine + 4 H(+). In terms of biological role, specifically dimethylates two adjacent adenosines (A1518 and A1519) in the loop of a conserved hairpin near the 3'-end of 16S rRNA in the 30S particle. May play a critical role in biogenesis of 30S subunits. This chain is Ribosomal RNA small subunit methyltransferase A, found in Chlorobium luteolum (strain DSM 273 / BCRC 81028 / 2530) (Pelodictyon luteolum).